The sequence spans 492 residues: Probable glycogen synthase 2 (492 aa).

K15 serves as a coordination point for ADP-alpha-D-glucose.

The protein belongs to the glycosyltransferase 1 family. Bacterial/plant glycogen synthase subfamily.

It catalyses the reaction [(1-&gt;4)-alpha-D-glucosyl](n) + ADP-alpha-D-glucose = [(1-&gt;4)-alpha-D-glucosyl](n+1) + ADP + H(+). The protein operates within glycan biosynthesis; glycogen biosynthesis. Functionally, synthesizes alpha-1,4-glucan chains using ADP-glucose. In Nostoc sp. (strain PCC 7120 / SAG 25.82 / UTEX 2576), this protein is Probable glycogen synthase 2 (glgA2).